The primary structure comprises 105 residues: MVNVPKTKKTYCKSKECRKHTLHKVTQYKKGKDSLAAQGKRRYDRKQSGYGGQTKPVFHKKAKTTKKIVLRLQCQGCKHVSQHPIKRCKHFEIGGDKKGKGTSLF.

Positions 28 to 57 (YKKGKDSLAAQGKRRYDRKQSGYGGQTKPV) are disordered.

This sequence belongs to the eukaryotic ribosomal protein eL42 family.

This Gossypium hirsutum (Upland cotton) protein is Large ribosomal subunit protein eL42 (RPL44).